Reading from the N-terminus, the 509-residue chain is Ethanolamine-phosphate phospho-lyase (509 aa).

At lysine 279 the chain carries N6-(pyridoxal phosphate)lysine. Basic and acidic residues predominate over residues 451–474; sequence EKTSAKRKVHNENSGDTNAKEKET. The segment at 451–509 is disordered; the sequence is EKTSAKRKVHNENSGDTNAKEKETCSSNSQERNPNDHAYRQSNGLHPESPTFTRKRIRT.

This sequence belongs to the class-III pyridoxal-phosphate-dependent aminotransferase family. In terms of assembly, homotetramer. Requires pyridoxal 5'-phosphate as cofactor.

It is found in the mitochondrion. It carries out the reaction phosphoethanolamine + H2O = acetaldehyde + NH4(+) + phosphate. Its function is as follows. Catalyzes the pyridoxal-phosphate-dependent breakdown of phosphoethanolamine, converting it to ammonia, inorganic phosphate and acetaldehyde. This is Ethanolamine-phosphate phospho-lyase (etnppl) from Xenopus laevis (African clawed frog).